Reading from the N-terminus, the 498-residue chain is ATP synthase subunit beta, chloroplastic (498 aa).

172–179 (GGAGVGKT) lines the ATP pocket.

Belongs to the ATPase alpha/beta chains family. As to quaternary structure, F-type ATPases have 2 components, CF(1) - the catalytic core - and CF(0) - the membrane proton channel. CF(1) has five subunits: alpha(3), beta(3), gamma(1), delta(1), epsilon(1). CF(0) has four main subunits: a(1), b(1), b'(1) and c(9-12).

The protein resides in the plastid. The protein localises to the chloroplast thylakoid membrane. The enzyme catalyses ATP + H2O + 4 H(+)(in) = ADP + phosphate + 5 H(+)(out). Produces ATP from ADP in the presence of a proton gradient across the membrane. The catalytic sites are hosted primarily by the beta subunits. The chain is ATP synthase subunit beta, chloroplastic from Calycanthus floridus (Eastern sweetshrub).